Consider the following 717-residue polypeptide: Trimethylamine N-oxide transport system permease protein TmoV (717 aa).

17 helical membrane passes run 10-30 (FFQW…IEVP), 69-89 (LPPL…FLMN), 120-140 (FMTF…ETIV), 153-173 (WAEL…ILGY), 175-195 (LSGK…SVFG), 206-226 (FILV…VMAF), 238-258 (ILLV…IVLF), 265-285 (AVII…LLGL), 319-339 (ILIG…ISAF), 355-375 (QLNI…AILL), 402-422 (ILFF…GSFY), 452-472 (IWDT…VDVL), 488-508 (LVLV…LVVG), 527-547 (LYMA…VGII), 574-594 (LIPV…AVIV), 643-663 (MLGL…GAFI), and 683-703 (GIGL…DHLI). One can recognise an ABC transmembrane type-1 1 domain in the interval 200–379 (SMQTLSFILV…LIAILLDKMS (180 aa)). The ABC transmembrane type-1 2 domain maps to 523–703 (ALVTLYMATF…FIGLIFDHLI (181 aa)).

The protein belongs to the binding-protein-dependent transport system permease family. The complex is probably composed of two ATP-binding proteins (TmoW), two transmembrane proteins (TmoV) and a solute-binding protein (TmoX).

The protein localises to the cell inner membrane. In terms of biological role, part of the ABC transporter complex TmoXWV involved in trimethylamine N-oxide (TMAO) import. Responsible for the translocation of the substrate across the membrane. This chain is Trimethylamine N-oxide transport system permease protein TmoV, found in Pelagibacter ubique (strain HTCC1062).